The sequence spans 193 residues: DNA damage-inducible transcript 4-like protein (193 aa).

It belongs to the DDIT4 family. As to expression, up-regulated in atherosclerotic plaques relative to healthy segments of the same artery.

Its subcellular location is the cytoplasm. Inhibits cell growth by regulating the TOR signaling pathway upstream of the TSC1-TSC2 complex and downstream of AKT1. The polypeptide is DNA damage-inducible transcript 4-like protein (DDIT4L) (Homo sapiens (Human)).